The chain runs to 136 residues: Large ribosomal subunit protein uL16c (136 aa).

It belongs to the universal ribosomal protein uL16 family. Part of the 50S ribosomal subunit.

It localises to the plastid. The protein resides in the chloroplast. The sequence is that of Large ribosomal subunit protein uL16c from Mesostigma viride (Green alga).